A 460-amino-acid polypeptide reads, in one-letter code: Cysteine proteinase 7 (460 aa).

Positions 1 to 17 (MKVLSALCVLLVSVATA) are cleaved as a signal peptide. Positions 18 to 111 (KQQLSEVEYR…TESDKIFDAS (94 aa)) are cleaved as a propeptide — activation peptide. 2 disulfides stabilise this stretch: cysteine 131–cysteine 176 and cysteine 167–cysteine 210. Cysteine 134 is an active-site residue. Residues asparagine 226 and asparagine 252 are each glycosylated (N-linked (GlcNAc...) asparagine). The cysteines at positions 268 and 445 are disulfide-linked. Histidine 275 is an active-site residue. Residues 285–409 (GSGSSGSHGG…GSSSGSNSNG (125 aa)) form a disordered region. Positions 294 to 359 (GSQSQSAGSD…QSGSQSGNSG (66 aa)) are enriched in low complexity. A compositionally biased stretch (gly residues) spans 367–385 (AGSGSGSGSGSGSGSGSGS). Positions 386–409 (VSGSASGSASGSASGSSSGSNSNG) are enriched in low complexity. Residue asparagine 423 is part of the active site.

Belongs to the peptidase C1 family. Glycosylated; contains GlcNAc-alpha-1-P-Ser residues. Also N-glycosylated.

The protein localises to the lysosome. This Dictyostelium discoideum (Social amoeba) protein is Cysteine proteinase 7 (cprG).